The sequence spans 1027 residues: Translation initiation factor IF-2 (1027 aa).

Residues 31–433 (YVKSASSTVE…GGVRLPRGNG (403 aa)) form a disordered region. Residues 57–68 (KKGGGDSNGRAG) show a composition bias toward gly residues. Positions 110–122 (GPKPGPKPGPKAP) are enriched in pro residues. Residues 123 to 145 (APETKPFEEAPAPAAKADAPAQP) show a composition bias toward low complexity. Basic and acidic residues predominate over residues 148-171 (EQPRSEQPRSEQPRSEQPRSERSG). Pro residues-rich tracts occupy residues 174–188 (PGGPKPGPKPGPKPG) and 201–212 (PPKPQSPKPGPR). The span at 237–268 (PGGGQRQGGQGPGRGGPQGGRPDRQGGGGQGA) shows a compositional bias: gly residues. Over residues 293-302 (GMMPPRPNPG) the composition is skewed to pro residues. The span at 311-397 (SGGGPGGGRG…GAAGAFGRPG (87 aa)) shows a compositional bias: gly residues. Residues 401–410 (RRGRKSKRQK) show a composition bias toward basic residues. The 173-residue stretch at 523 to 695 (SRPPVVTVMG…ILLTADATLD (173 aa)) folds into the tr-type G domain. A G1 region spans residues 532–539 (GHVDHGKT). 532-539 (GHVDHGKT) serves as a coordination point for GTP. The G2 stretch occupies residues 557 to 561 (GITQH). Positions 582-585 (DTPG) are G3. GTP-binding positions include 582–586 (DTPGH) and 636–639 (NKID). A G4 region spans residues 636–639 (NKID). Residues 672-674 (SAR) form a G5 region.

Belongs to the TRAFAC class translation factor GTPase superfamily. Classic translation factor GTPase family. IF-2 subfamily.

The protein resides in the cytoplasm. In terms of biological role, one of the essential components for the initiation of protein synthesis. Protects formylmethionyl-tRNA from spontaneous hydrolysis and promotes its binding to the 30S ribosomal subunits. Also involved in the hydrolysis of GTP during the formation of the 70S ribosomal complex. The chain is Translation initiation factor IF-2 from Saccharopolyspora erythraea (strain ATCC 11635 / DSM 40517 / JCM 4748 / NBRC 13426 / NCIMB 8594 / NRRL 2338).